The following is a 114-amino-acid chain: Probable 4-amino-4-deoxy-L-arabinose-phosphoundecaprenol flippase subunit ArnE (114 aa).

A run of 3 helical transmembrane segments spans residues Met41 to Leu61, Met64 to Gly84, and Pro91 to Gly111.

It belongs to the ArnE family. As to quaternary structure, heterodimer of ArnE and ArnF.

It is found in the cell inner membrane. Its pathway is bacterial outer membrane biogenesis; lipopolysaccharide biosynthesis. Functionally, translocates 4-amino-4-deoxy-L-arabinose-phosphoundecaprenol (alpha-L-Ara4N-phosphoundecaprenol) from the cytoplasmic to the periplasmic side of the inner membrane. The protein is Probable 4-amino-4-deoxy-L-arabinose-phosphoundecaprenol flippase subunit ArnE of Pseudomonas savastanoi pv. phaseolicola (strain 1448A / Race 6) (Pseudomonas syringae pv. phaseolicola (strain 1448A / Race 6)).